A 374-amino-acid chain; its full sequence is MARSGYTLPVFACAAAIAALQRLRQPAASIQSVDCHLIDPDQTVAIAIEQVAPLSPDRALAICRSDPGDNLDLTRGTPIWAEVQLSPRSPDQDSLAIEAGEGIGHSETGPAIYDYAQRLLRANLLPLLQTNEQLTVRLILPEGRRLAERTANAAFGVVEGLSLLGTHGVAEALSAPEQLQVFRDRLRQLSADPDLVIFCIGENGLDLSQKIGLPRDRQLKTANWLGPLLVEAGLLGIPRILLFGYHGKLLKLAGSIFHTHHHVADARREILAAYAIAAGASLEQVRSLLDFPTVDAATQYLDQTDPALASRLWPQIAEAIVDRSQAYIRRYSEQIPEIGVVLFGRDRQLLTASSQAQTWLTNRAIAQPLRYPSA.

This sequence belongs to the CbiD family.

The catalysed reaction is Co-precorrin-5B + S-adenosyl-L-methionine = Co-precorrin-6A + S-adenosyl-L-homocysteine. It functions in the pathway cofactor biosynthesis; adenosylcobalamin biosynthesis; cob(II)yrinate a,c-diamide from sirohydrochlorin (anaerobic route): step 6/10. Functionally, catalyzes the methylation of C-1 in cobalt-precorrin-5B to form cobalt-precorrin-6A. This is Cobalt-precorrin-5B C(1)-methyltransferase from Synechococcus elongatus (strain ATCC 33912 / PCC 7942 / FACHB-805) (Anacystis nidulans R2).